Here is a 395-residue protein sequence, read N- to C-terminus: G-protein coupled receptor 182 (395 aa).

Residues 1 to 53 lie on the Extracellular side of the membrane; sequence MSVIPSSRPVSTLAPDNDFREIHNWTELLHLFNQTFSDCHMELNENTKQVVLF. 2 N-linked (GlcNAc...) asparagine glycosylation sites follow: Asn-24 and Asn-33. Residues 54-75 form a helical membrane-spanning segment; that stretch reads VFYLAIFVVGLVENVLVICVNC. Over 76-86 the chain is Cytoplasmic; it reads RRSGRVGMLNL. The chain crosses the membrane as a helical span at residues 87 to 109; sequence YILNMAVADLGIILSLPVWMLEV. The Extracellular segment spans residues 110-123; it reads MLEYTWLWGSFSCR. Cys-122 and Cys-198 are oxidised to a cystine. Residues 124–145 form a helical membrane-spanning segment; sequence FIHYFYLANMYSSIFFLTCLSI. Residues 146-166 are Cytoplasmic-facing; that stretch reads DRYVTLTNTSPSWQRHQHRIR. A helical transmembrane segment spans residues 167–189; sequence RAVCAGVWVLSAIIPLPEVVHIQ. Residues 190–213 lie on the Extracellular side of the membrane; the sequence is LLDGSEPMCLFLAPFETYSAWALA. A helical transmembrane segment spans residues 214–235; it reads VALSATILGFLLPFPLIAVFNI. Over 236-254 the chain is Cytoplasmic; sequence LSACRLRRQGQTESRRHCL. A helical transmembrane segment spans residues 255–276; it reads LMWAYIVVFVICWLPYHVTMLL. The Extracellular segment spans residues 277–295; that stretch reads LTLHTTHIFLHCNLVNFLY. Residues 296 to 316 traverse the membrane as a helical segment; it reads FFYEIIDCFSMLHCVANPILY. The Cytoplasmic segment spans residues 317–395; it reads NFLSPSFRGR…RTPHLHSAIP (79 aa). At Ser-329 the chain carries Phosphoserine.

This sequence belongs to the G-protein coupled receptor 1 family. As to expression, expressed in a wide variety of peripheral tissues in the adult rat with prominent expression in lung, testis, adrenal and liver.

It is found in the cell membrane. Its function is as follows. Orphan receptor. In Rattus norvegicus (Rat), this protein is G-protein coupled receptor 182 (Gpr182).